Consider the following 272-residue polypeptide: MSSREELGVAVAGLGAIGKALANRLARNEVAGCRLSAVSGRDPGRTADFIASLPRPVPAVPLHELPRHADIVVECAPAAVLPQIVEPVLDAGKKVIVLSVGALLEFPELFRKAGSSDGQILVPTGALLGLDAVTAAAEGRIESVKMVSRKPPIGFKGAPILAERNLDIDGLTEPLLLYSGSARAAARGFPANLNVAVALSLAGIGPDETQLEVWADPGVVRNTHTIEVVSDAALLRMTIENIPSENPKTGRITAQSVMAMLRKMSAPVRVGT.

Residues A126 and N194 each coordinate NAD(+). Residue H224 is part of the active site.

It belongs to the L-aspartate dehydrogenase family.

The catalysed reaction is L-aspartate + NADP(+) + H2O = oxaloacetate + NH4(+) + NADPH + H(+). The enzyme catalyses L-aspartate + NAD(+) + H2O = oxaloacetate + NH4(+) + NADH + H(+). It participates in cofactor biosynthesis; NAD(+) biosynthesis; iminoaspartate from L-aspartate (dehydrogenase route): step 1/1. Specifically catalyzes the NAD or NADP-dependent dehydrogenation of L-aspartate to iminoaspartate. The sequence is that of L-aspartate dehydrogenase 3 from Bordetella bronchiseptica (strain ATCC BAA-588 / NCTC 13252 / RB50) (Alcaligenes bronchisepticus).